Consider the following 1107-residue polypeptide: DNA-directed RNA polymerase subunit beta (1107 aa).

Positions 1062-1075 (DNEGNEKEKARELG) are enriched in basic and acidic residues. A disordered region spans residues 1062–1081 (DNEGNEKEKARELGLDLPDN).

This sequence belongs to the RNA polymerase beta chain family. In terms of assembly, the RNAP catalytic core consists of 2 alpha, 1 beta, 1 beta' and 1 omega subunit. When a sigma factor is associated with the core the holoenzyme is formed, which can initiate transcription.

It catalyses the reaction RNA(n) + a ribonucleoside 5'-triphosphate = RNA(n+1) + diphosphate. In terms of biological role, DNA-dependent RNA polymerase catalyzes the transcription of DNA into RNA using the four ribonucleoside triphosphates as substrates. The protein is DNA-directed RNA polymerase subunit beta of Syntrophomonas wolfei subsp. wolfei (strain DSM 2245B / Goettingen).